We begin with the raw amino-acid sequence, 639 residues long: MSYEALFSPFKVRGLELKNRIVLPGMNTKMAKNKHDIGEDMIAYHVARAKAGCALNIFECVALCPAPHAYMYMGLYTDHHVEQLKKLTDAVHEAGGKMGIQLWHGGFSPQMFFDETNTLETPDTLTVERIHEIVEEFGRGARMAVQAGFDAVEFHAAHSYLPHEFLSPGMNKRTDEYGGSFENRCRFCYEVVQAIRSNIPDDMPFFMRADCIDELMEQTMTEEEIVTFINKCAELGVDVADLSRGNATSFATVYEVPPFNLAHGFNIENIYNIKKQINIPVMGVGRINTGEMANKVIEEGKFDLVGIGRAQLADPNWITKVREGKEDLIRHCIGCDQGCYDAVINPKMKHITCTHNPGLCLEYQGMPKTDAPKKVMIVGGGMAGMIAAEVLKTRGHNPVIFEASDKLAGQFRLAGVAPMKQDWADVAEWEAKEVERLGIEVRLNTEVTAETIKEFNPDNVIIAVGSTYALPEIPGIDSPSVYSQYQVLKGEVNPTGRVAVIGCGLVGTEVAELLASRGAQVIAIERKGVGTGLSMLRRMFMNPEFKYYKIAKMSGTNVTALEQGKVHYIMTDKKTKEVTQGVLECDATVICTGITARPSDGLKARCEELGIPVEVIGDAAGARDCTIATREGYDAGMAI.

Position 101 (Gln-101) interacts with FMN. Residue 155–158 (HAAH) participates in substrate binding. Tyr-160 (proton donor) is an active-site residue. FMN-binding positions include Arg-208, Arg-286, and 308-309 (GR). Residues Cys-332 and Cys-335 each coordinate [4Fe-4S] cluster. Gln-337 provides a ligand contact to FAD. The [4Fe-4S] cluster site is built by Cys-339 and Cys-353. Positions 383, 402, 410, 420, and 447 each coordinate FAD.

The protein in the N-terminal section; belongs to the NADH:flavin oxidoreductase/NADH oxidase family. Requires FMN as cofactor. FAD serves as cofactor. It depends on [4Fe-4S] cluster as a cofactor.

It catalyses the reaction 7alpha,12alpha-dihydroxy-3-oxochol-24-oyl-CoA + NAD(+) = 7alpha,12alpha-dihydroxy-3-oxochol-4-en-24-oyl-CoA + NADH + H(+). It carries out the reaction 7alpha-hydroxy-3-oxochol-24-oyl-CoA + NAD(+) = 7alpha-hydroxy-3-oxochol-4-en-24-oyl-CoA + NADH + H(+). Its pathway is lipid metabolism; bile acid degradation. In terms of biological role, stereo-specific NAD(H)-dependent 3-oxo-delta4-cholenoic acid oxidoreductase involved in bile acid 7alpha-dehydroxylation. This is 3-oxocholoyl-CoA 4-desaturase from Clostridium scindens (strain JCM 10418 / VPI 12708).